A 469-amino-acid chain; its full sequence is Trigger factor (469 aa).

One can recognise a PPIase FKBP-type domain in the interval 162 to 243; sequence GDFVSIDLSA…VKSVKERELP (82 aa). The interval 438 to 469 is disordered; sequence GPSGEQAAEDSAEESTDAAEGEAAEDADDTDK. Residues 444-469 are compositionally biased toward acidic residues; that stretch reads AAEDSAEESTDAAEGEAAEDADDTDK.

This sequence belongs to the FKBP-type PPIase family. Tig subfamily.

The protein resides in the cytoplasm. The catalysed reaction is [protein]-peptidylproline (omega=180) = [protein]-peptidylproline (omega=0). Functionally, involved in protein export. Acts as a chaperone by maintaining the newly synthesized protein in an open conformation. Functions as a peptidyl-prolyl cis-trans isomerase. In Mycolicibacterium smegmatis (strain ATCC 700084 / mc(2)155) (Mycobacterium smegmatis), this protein is Trigger factor.